We begin with the raw amino-acid sequence, 1199 residues long: DNA-directed RNA polymerase subunit beta' (1199 aa).

Residues Cys60, Cys62, Cys75, and Cys78 each coordinate Zn(2+). Mg(2+)-binding residues include Asp449, Asp451, and Asp453. Zn(2+)-binding residues include Cys818, Cys892, Cys899, and Cys902.

Belongs to the RNA polymerase beta' chain family. The RNAP catalytic core consists of 2 alpha, 1 beta, 1 beta' and 1 omega subunit. When a sigma factor is associated with the core the holoenzyme is formed, which can initiate transcription. Requires Mg(2+) as cofactor. Zn(2+) serves as cofactor.

It carries out the reaction RNA(n) + a ribonucleoside 5'-triphosphate = RNA(n+1) + diphosphate. DNA-dependent RNA polymerase catalyzes the transcription of DNA into RNA using the four ribonucleoside triphosphates as substrates. The protein is DNA-directed RNA polymerase subunit beta' of Bacillus licheniformis (strain ATCC 14580 / DSM 13 / JCM 2505 / CCUG 7422 / NBRC 12200 / NCIMB 9375 / NCTC 10341 / NRRL NRS-1264 / Gibson 46).